Here is a 767-residue protein sequence, read N- to C-terminus: E3 ubiquitin-protein ligase pub1 (767 aa).

One can recognise a C2 domain in the interval 1–111 (MSNSAQSRRI…AIGGDEMLTR (111 aa)). Residues 138 to 158 (LQVPSSAASGARTQRTSITND) are compositionally biased toward polar residues. Disordered regions lie at residues 138–216 (LQVP…RRTD) and 252–306 (SASS…RPYF). At T156 the chain carries Phosphothreonine. The span at 159 to 176 (PQSSQSSSVSRNPASSRA) shows a compositional bias: low complexity. Residue S178 is modified to Phosphoserine. A Phosphothreonine modification is found at T180. The span at 184–194 (APAASPASSEP) shows a compositional bias: low complexity. The WW 1 domain occupies 211-236 (WERRTDNLGRTYYVDHNTRSTTWIRP). The span at 257–286 (NVTEGVQPSSSNAARRTEASVLTSNATTAG) shows a compositional bias: polar residues. 2 WW domains span residues 294 to 319 (WEQR…WVDP) and 351 to 376 (WEMR…WDDP). The region spanning 463 to 767 (FLLSHEMFNP…VEETIGFGQE (305 aa)) is the HECT domain. C735 functions as the Glycyl thioester intermediate in the catalytic mechanism.

It localises to the membrane. The protein resides in the cytoplasm. The enzyme catalyses S-ubiquitinyl-[E2 ubiquitin-conjugating enzyme]-L-cysteine + [acceptor protein]-L-lysine = [E2 ubiquitin-conjugating enzyme]-L-cysteine + N(6)-ubiquitinyl-[acceptor protein]-L-lysine.. It participates in protein modification; protein ubiquitination. In terms of biological role, E3 ubiquitin-protein ligase which accepts ubiquitin from an E2 ubiquitin-conjugating enzyme in the form of a thioester and then directly transfers the ubiquitin to targeted substrates. Regulates ubiquitination of cdc25. The chain is E3 ubiquitin-protein ligase pub1 (pub1) from Schizosaccharomyces pombe (strain 972 / ATCC 24843) (Fission yeast).